Here is a 152-residue protein sequence, read N- to C-terminus: Large ribosomal subunit protein uL22 (152 aa).

The protein belongs to the universal ribosomal protein uL22 family. In terms of assembly, part of the 50S ribosomal subunit.

This protein binds specifically to 23S rRNA. It makes multiple contacts with different domains of the 23S rRNA in the assembled 50S subunit and ribosome. Its function is as follows. The globular domain of the protein is located near the polypeptide exit tunnel on the outside of the subunit, while an extended beta-hairpin is found that lines the wall of the exit tunnel in the center of the 70S ribosome. The sequence is that of Large ribosomal subunit protein uL22 from Methanothrix thermoacetophila (strain DSM 6194 / JCM 14653 / NBRC 101360 / PT) (Methanosaeta thermophila).